A 305-amino-acid chain; its full sequence is Methionyl-tRNA formyltransferase (305 aa).

111-114 (SLLP) provides a ligand contact to (6S)-5,6,7,8-tetrahydrofolate.

This sequence belongs to the Fmt family.

The catalysed reaction is L-methionyl-tRNA(fMet) + (6R)-10-formyltetrahydrofolate = N-formyl-L-methionyl-tRNA(fMet) + (6S)-5,6,7,8-tetrahydrofolate + H(+). In terms of biological role, attaches a formyl group to the free amino group of methionyl-tRNA(fMet). The formyl group appears to play a dual role in the initiator identity of N-formylmethionyl-tRNA by promoting its recognition by IF2 and preventing the misappropriation of this tRNA by the elongation apparatus. This is Methionyl-tRNA formyltransferase from Campylobacter jejuni subsp. jejuni serotype O:2 (strain ATCC 700819 / NCTC 11168).